Reading from the N-terminus, the 358-residue chain is UPF0283 membrane protein PM0909 (358 aa).

The next 3 helical transmembrane spans lie at 62-82, 90-110, and 213-233; these read LALT…QWLV, WIYF…VSSL, and ALEA…MFFL.

This sequence belongs to the UPF0283 family.

Its subcellular location is the cell inner membrane. The chain is UPF0283 membrane protein PM0909 from Pasteurella multocida (strain Pm70).